Consider the following 491-residue polypeptide: Probable glycine dehydrogenase (decarboxylating) subunit 2 (491 aa).

The residue at position 273 (Lys-273) is an N6-(pyridoxal phosphate)lysine.

The protein belongs to the GcvP family. C-terminal subunit subfamily. The glycine cleavage system is composed of four proteins: P, T, L and H. In this organism, the P 'protein' is a heterodimer of two subunits. The cofactor is pyridoxal 5'-phosphate.

The enzyme catalyses N(6)-[(R)-lipoyl]-L-lysyl-[glycine-cleavage complex H protein] + glycine + H(+) = N(6)-[(R)-S(8)-aminomethyldihydrolipoyl]-L-lysyl-[glycine-cleavage complex H protein] + CO2. Functionally, the glycine cleavage system catalyzes the degradation of glycine. The P protein binds the alpha-amino group of glycine through its pyridoxal phosphate cofactor; CO(2) is released and the remaining methylamine moiety is then transferred to the lipoamide cofactor of the H protein. The chain is Probable glycine dehydrogenase (decarboxylating) subunit 2 from Bacillus cereus (strain B4264).